The following is a 152-amino-acid chain: UPF0756 membrane protein Daud_1310 (152 aa).

The next 4 membrane-spanning stretches (helical) occupy residues 14 to 34, 51 to 71, 76 to 96, and 112 to 132; these read LVGVLAKSHLIAAAACILLFI, LELGLLILLLTIMVPLANGKI, IIYNLTSIPGLLAILGGALAT, and IIFGLIIGSIFGILFLGGMPV.

Belongs to the UPF0756 family.

Its subcellular location is the cell membrane. The protein is UPF0756 membrane protein Daud_1310 of Desulforudis audaxviator (strain MP104C).